We begin with the raw amino-acid sequence, 329 residues long: Ubiquinol oxidase 1c, mitochondrial (329 aa).

Residues 1–45 constitute a mitochondrion transit peptide; that stretch reads MITTLLRRSLLDASKQATSINGILFHQLAPAKYFRVPAVGGLRDF. Residues 154–174 traverse the membrane as a helical segment; the sequence is AIMLETVAAVPGMVGGMLMHF. Glutamate 158, glutamate 197, and histidine 200 together coordinate Fe cation. A helical transmembrane segment spans residues 216-236; it reads ALVISVQGVFFNAYLIGYIIS. Residues glutamate 248, glutamate 299, and histidine 302 each contribute to the Fe cation site.

Belongs to the alternative oxidase family. As to quaternary structure, homodimer; disulfide-linked. Requires Fe cation as cofactor. In terms of tissue distribution, expressed in roots, stems, leaves, cotyledons and flowers. High expression in stamens.

Its subcellular location is the mitochondrion inner membrane. It catalyses the reaction 2 a ubiquinol + O2 = 2 a ubiquinone + 2 H2O. Catalyzes the cyanide-resistant oxidation of ubiquinol and the reduction of molecular oxygen to water, but does not translocate protons and consequently is not linked to oxidative phosphorylation. May increase respiration when the cytochrome respiratory pathway is restricted, or in response to low temperatures. In Arabidopsis thaliana (Mouse-ear cress), this protein is Ubiquinol oxidase 1c, mitochondrial (AOX1C).